The primary structure comprises 131 residues: Leptin receptor gene-related protein (131 aa).

The next 4 membrane-spanning stretches (helical) occupy residues Leu-7–Leu-27, Val-32–Ala-52, Leu-69–Ala-89, and Gly-100–Phe-120.

This sequence belongs to the OB-RGRP/VPS55 family. Interacts with LEPR. Interacts with RAB13.

The protein localises to the golgi apparatus membrane. Its subcellular location is the endosome membrane. Its function is as follows. Negatively regulates leptin receptor (LEPR) cell surface expression, and thus decreases response to leptin/LEP. Negatively regulates growth hormone (GH) receptor cell surface expression in liver. May play a role in liver resistance to GH during periods of reduced nutrient availability. The sequence is that of Leptin receptor gene-related protein (LEPROT) from Sus scrofa (Pig).